The following is a 338-amino-acid chain: Fructose-1,6-bisphosphatase class 1 (338 aa).

The Mg(2+) site is built by E94, D116, L118, and D119. Residues 119–122 (DGSS), N210, and K276 contribute to the substrate site. Residue E282 participates in Mg(2+) binding.

It belongs to the FBPase class 1 family. In terms of assembly, homotetramer. It depends on Mg(2+) as a cofactor.

The protein localises to the cytoplasm. It catalyses the reaction beta-D-fructose 1,6-bisphosphate + H2O = beta-D-fructose 6-phosphate + phosphate. It participates in carbohydrate biosynthesis; gluconeogenesis. This Burkholderia mallei (strain NCTC 10247) protein is Fructose-1,6-bisphosphatase class 1.